Here is a 638-residue protein sequence, read N- to C-terminus: Cytoplasmic dynein 1 intermediate chain 2 (638 aa).

Basic and acidic residues-rich tracts occupy residues 1–13 (MSDKSELKAELER) and 20–43 (QIREEKKRKEEERKKKETDQKKEA). Disordered stretches follow at residues 1–135 (MSDK…GRGP) and 154–209 (VTYT…HELT). Serine 2 is modified (N-acetylserine). Residue serine 51 is modified to Diphosphoserine. Phosphoserine occurs at positions 51 and 90. Low complexity predominate over residues 88-97 (PSSKSVSTPS). Phosphothreonine is present on threonine 95. 3 positions are modified to phosphoserine: serine 97, serine 101, and serine 104. Positions 133-165 (RGPIKLGMAKITQVDFPPREIVTYTKETQTPVT) are interaction with DYNLT1. Positions 190–209 (EKILKKDEENDSKAPPHELT) are enriched in basic and acidic residues. WD repeat units follow at residues 277-326 (SKHR…TTPE), 330-370 (HCQS…RTPV), 379-420 (AHTH…HPQD), 429-469 (SKAV…AGIS), 474-519 (GHQG…PLYS), and 568-607 (EGNPALNRVRWTHSGREIAVGDSEGQIVIYDVGEQIAVPR).

This sequence belongs to the dynein intermediate chain family. In terms of assembly, homodimer. The cytoplasmic dynein 1 complex consists of two catalytic heavy chains (HCs) and a number of non-catalytic subunits presented by intermediate chains (ICs), light intermediate chains (LICs) and light chains (LCs); the composition seems to vary in respect to the IC, LIC and LC composition. The heavy chain homodimer serves as a scaffold for the probable homodimeric assembly of the respective non-catalytic subunits. The ICs and LICs bind directly to the HC dimer and the LCs assemble on the IC dimer. Interacts with DYNLT3. Interacts with DYNLT1. Interacts (dephosphorylated at Ser-90) with DCTN1. Interacts with BICD2. Interacts with SPEF2. Interacts with CFAP61. Post-translationally, the phosphorylation status of Ser-90 appears to be involved in dynactin-dependent target binding. Pyrophosphorylation by 5-diphosphoinositol pentakisphosphate (5-IP7) promotes interaction with DCTN1. Serine pyrophosphorylation is achieved by Mg(2+)-dependent, but enzyme independent transfer of a beta-phosphate from a inositol pyrophosphate to a pre-phosphorylated serine residue. Skeletal muscle, testis, kidney, brain, heart and spleen.

The protein resides in the cytoplasm. The protein localises to the cytoskeleton. Its function is as follows. Acts as one of several non-catalytic accessory components of the cytoplasmic dynein 1 complex that are thought to be involved in linking dynein to cargos and to adapter proteins that regulate dynein function. Cytoplasmic dynein 1 acts as a motor for the intracellular retrograde motility of vesicles and organelles along microtubules. The intermediate chains mediate the binding of dynein to dynactin via its 150 kDa component (p150-glued) DCTN1. Involved in membrane-transport, such as Golgi apparatus, late endosomes and lysosomes. The protein is Cytoplasmic dynein 1 intermediate chain 2 (Dync1i2) of Rattus norvegicus (Rat).